A 237-amino-acid polypeptide reads, in one-letter code: Myb-related protein MYBAS1 (237 aa).

2 HTH myb-type domains span residues 5–57 (REEM…VNYL) and 58–112 (HPGL…RKKA). Positions 33–57 (WDFVAKVSGLNRTGKSCRLRWVNYL) form a DNA-binding region, H-T-H motif. Positions 62–65 (KHGR) match the Bipartite nuclear localization signal 1 motif. The segment at residues 85 to 108 (WSRIARRLPGRTDNEIKNYWRTHM) is a DNA-binding region (H-T-H motif). The Bipartite nuclear localization signal 2 motif lies at 109 to 117 (RKKAQERRG).

The protein localises to the nucleus. Transcription factor. This chain is Myb-related protein MYBAS1 (MYBAS1), found in Oryza sativa subsp. japonica (Rice).